The following is a 554-amino-acid chain: Glucose-6-phosphate isomerase (554 aa).

The Proton donor role is filled by Glu-359. Residues His-390 and Lys-518 contribute to the active site.

Belongs to the GPI family.

It localises to the cytoplasm. The enzyme catalyses alpha-D-glucose 6-phosphate = beta-D-fructose 6-phosphate. It functions in the pathway carbohydrate biosynthesis; gluconeogenesis. Its pathway is carbohydrate degradation; glycolysis; D-glyceraldehyde 3-phosphate and glycerone phosphate from D-glucose: step 2/4. Functionally, catalyzes the reversible isomerization of glucose-6-phosphate to fructose-6-phosphate. This chain is Glucose-6-phosphate isomerase, found in Pseudomonas savastanoi pv. phaseolicola (strain 1448A / Race 6) (Pseudomonas syringae pv. phaseolicola (strain 1448A / Race 6)).